We begin with the raw amino-acid sequence, 234 residues long: Synaptogyrin-1 (234 aa).

M1 is subject to N-acetylmethionine. The Cytoplasmic segment spans residues 1-23; it reads MEGGAYGAGKAGGAFDPYTLVRQ. Residues 20 to 173 enclose the MARVEL domain; it reads LVRQPHTILR…QAVLAFQRYQ (154 aa). Residues 24–44 form a helical membrane-spanning segment; sequence PHTILRVVSWVFSIVVFGSIV. At 45–71 the chain is on the lumenal side; the sequence is NEGYLNNPEEEEEFCIYNRNPNACSYG. The helical transmembrane segment at 72–92 threads the bilayer; that stretch reads VTVGVLAFLTCLVYLALDVYF. The Cytoplasmic portion of the chain corresponds to 93 to 104; that stretch reads PQISSVKDRKKA. The chain crosses the membrane as a helical span at residues 105-125; that stretch reads VLSDIGVSAFWAFFWFVGFCF. Over 126-148 the chain is Lumenal; the sequence is LANQWQVSKPKDNPLNEGTDAAR. Residues 149–169 traverse the membrane as a helical segment; sequence AAIAFSFFSIFTWAGQAVLAF. At 170–234 the chain is on the cytoplasmic side; the sequence is QRYQIGADSA…EPQGYQSQGY (65 aa). Positions 201-234 are disordered; the sequence is EPSAGSDPTGMGGTYQHPANAFDAEPQGYQSQGY.

The protein belongs to the synaptogyrin family. In terms of tissue distribution, nervous system (at protein level).

It localises to the cytoplasmic vesicle. It is found in the secretory vesicle. The protein resides in the synaptic vesicle membrane. The protein localises to the melanosome. Functionally, may play a role in regulated exocytosis. Modulates the localization of synaptophysin/SYP into synaptic-like microvesicles and may therefore play a role in synaptic-like microvesicle formation and/or maturation. Involved in the regulation of short-term and long-term synaptic plasticity. The protein is Synaptogyrin-1 of Rattus norvegicus (Rat).